A 179-amino-acid polypeptide reads, in one-letter code: uncharacterized protein (179 aa).

Positions 1-15 (MQRQTGHMEDKKRTG) are enriched in basic and acidic residues. The segment at 1 to 32 (MQRQTGHMEDKKRTGLESQGTENAFSDGRDGK) is disordered.

This is an uncharacterized protein from Gallus gallus (Chicken).